The following is a 142-amino-acid chain: Hemoglobin subunit alpha (142 aa).

N-acetylserine is present on Ser1. The 142-residue stretch at 1–142 (SLTAKSKSIV…VASALSEKYR (142 aa)) folds into the Globin domain. O2 is bound at residue His59. His88 serves as a coordination point for heme b.

The protein belongs to the globin family. Heterotetramer of two alpha chains and two beta chains. As to expression, red blood cells.

Its function is as follows. Involved in oxygen transport from gills to the various peripheral tissues. This Electrophorus electricus (Electric eel) protein is Hemoglobin subunit alpha (hba).